We begin with the raw amino-acid sequence, 308 residues long: Aspartate carbamoyltransferase catalytic subunit (308 aa).

Residues Arg-57 and Thr-58 each contribute to the carbamoyl phosphate site. Position 86 (Lys-86) interacts with L-aspartate. Residues Arg-107, His-135, and Gln-138 each coordinate carbamoyl phosphate. L-aspartate is bound by residues Arg-168 and Arg-229. Positions 268 and 269 each coordinate carbamoyl phosphate.

Belongs to the aspartate/ornithine carbamoyltransferase superfamily. ATCase family. In terms of assembly, heterooligomer of catalytic and regulatory chains.

The enzyme catalyses carbamoyl phosphate + L-aspartate = N-carbamoyl-L-aspartate + phosphate + H(+). The protein operates within pyrimidine metabolism; UMP biosynthesis via de novo pathway; (S)-dihydroorotate from bicarbonate: step 2/3. Catalyzes the condensation of carbamoyl phosphate and aspartate to form carbamoyl aspartate and inorganic phosphate, the committed step in the de novo pyrimidine nucleotide biosynthesis pathway. In Pyrococcus furiosus (strain ATCC 43587 / DSM 3638 / JCM 8422 / Vc1), this protein is Aspartate carbamoyltransferase catalytic subunit.